We begin with the raw amino-acid sequence, 247 residues long: ATP synthase subunit a, chloroplastic (247 aa).

The next 5 helical transmembrane spans lie at 28 to 48, 95 to 115, 134 to 154, 199 to 219, and 220 to 240; these read GQVL…CLLG, VPFL…GALI, INTT…AGIS, LVVG…IMLL, and GLFT…AYIG.

The protein belongs to the ATPase A chain family. In terms of assembly, F-type ATPases have 2 components, CF(1) - the catalytic core - and CF(0) - the membrane proton channel. CF(1) has five subunits: alpha(3), beta(3), gamma(1), delta(1), epsilon(1). CF(0) has four main subunits: a, b, b' and c.

The protein resides in the plastid. The protein localises to the chloroplast thylakoid membrane. Functionally, key component of the proton channel; it plays a direct role in the translocation of protons across the membrane. The sequence is that of ATP synthase subunit a, chloroplastic from Chlorella vulgaris (Green alga).